The following is a 1447-amino-acid chain: DNA-directed RNA polymerase subunit beta' (1447 aa).

4 residues coordinate Zn(2+): Cys70, Cys72, Cys85, and Cys88. Mg(2+) contacts are provided by Asp460, Asp462, and Asp464. Zn(2+)-binding residues include Cys890, Cys964, Cys971, and Cys974.

This sequence belongs to the RNA polymerase beta' chain family. In terms of assembly, the RNAP catalytic core consists of 2 alpha, 1 beta, 1 beta' and 1 omega subunit. When a sigma factor is associated with the core the holoenzyme is formed, which can initiate transcription. It depends on Mg(2+) as a cofactor. Zn(2+) serves as cofactor.

It catalyses the reaction RNA(n) + a ribonucleoside 5'-triphosphate = RNA(n+1) + diphosphate. Functionally, DNA-dependent RNA polymerase catalyzes the transcription of DNA into RNA using the four ribonucleoside triphosphates as substrates. The protein is DNA-directed RNA polymerase subunit beta' of Desulfosudis oleivorans (strain DSM 6200 / JCM 39069 / Hxd3) (Desulfococcus oleovorans).